We begin with the raw amino-acid sequence, 92 residues long: MTRSLKKNPFVANHLLRKINKLNTKAEKNLIVTWSRASTIIPTMIGHTIAIHNGKEHLPIYITDRMVGHKLGEFAPTLNFRGHAKNDNKSRR.

The protein belongs to the universal ribosomal protein uS19 family.

It localises to the plastid. The protein localises to the chloroplast. Its function is as follows. Protein S19 forms a complex with S13 that binds strongly to the 16S ribosomal RNA. The chain is Small ribosomal subunit protein uS19c from Populus alba (White poplar).